We begin with the raw amino-acid sequence, 88 residues long: Mitochondrial import inner membrane translocase subunit TIM9 (88 aa).

The Twin CX3C motif signature appears at 35–59 (CFDDCVNDFTSNNLTTKETGCITKC). Cystine bridges form between C35/C59 and C39/C55.

The protein belongs to the small Tim family. In terms of assembly, heterohexamer; composed of 3 copies of TIM9 and 3 copies of TIM10, named soluble 70 kDa complex. Associates with the TIM22 complex, whose core is composed of TIM22 and TIM54. Interacts with the transmembrane regions of multi-pass transmembrane proteins in transit.

Its subcellular location is the mitochondrion inner membrane. Its function is as follows. Mitochondrial intermembrane chaperone that participates in the import and insertion of multi-pass transmembrane proteins into the mitochondrial inner membrane. Also required for the transfer of beta-barrel precursors from the TOM complex to the sorting and assembly machinery (SAM complex) of the outer membrane. Acts as a chaperone-like protein that protects the hydrophobic precursors from aggregation and guide them through the mitochondrial intermembrane space. In Debaryomyces hansenii (strain ATCC 36239 / CBS 767 / BCRC 21394 / JCM 1990 / NBRC 0083 / IGC 2968) (Yeast), this protein is Mitochondrial import inner membrane translocase subunit TIM9 (TIM9).